Reading from the N-terminus, the 436-residue chain is UPF0597 protein YhaM (436 aa).

It belongs to the UPF0597 family.

This Escherichia coli O139:H28 (strain E24377A / ETEC) protein is UPF0597 protein YhaM.